The chain runs to 508 residues: Maturase K (508 aa).

Belongs to the intron maturase 2 family. MatK subfamily.

The protein localises to the plastid. The protein resides in the chloroplast. Usually encoded in the trnK tRNA gene intron. Probably assists in splicing its own and other chloroplast group II introns. The sequence is that of Maturase K from Manilkara zapota (Sapodilla plum).